Reading from the N-terminus, the 105-residue chain is Iron-sulfur cluster assembly protein CyaY (105 aa).

This sequence belongs to the frataxin family.

In terms of biological role, involved in iron-sulfur (Fe-S) cluster assembly. May act as a regulator of Fe-S biogenesis. The protein is Iron-sulfur cluster assembly protein CyaY of Paraburkholderia phymatum (strain DSM 17167 / CIP 108236 / LMG 21445 / STM815) (Burkholderia phymatum).